We begin with the raw amino-acid sequence, 603 residues long: Probable lysosomal cobalamin transporter (603 aa).

9 helical membrane passes run 13 to 33 (IWVAYAVAVALVFFVAVITVF), 50 to 70 (IVSLTALLATVFLLPVDIALV), 99 to 119 (IVYYSLYSFDALLCLVVIPFA), 150 to 170 (IAFIILVIILFLVGFFVPTAA), 201 to 221 (LLMTLGVLLYVLYTATGLALL), 318 to 338 (LFGGILLLCLSVILWISMLIT), 353 to 373 (GYILGHINVFQPVNWVFVKAA), 381 to 401 (ILMAFLILFLFSSSITGIASV), and 422 to 442 (ALLIATVMQALIILAINYAVV). The N-linked (GlcNAc...) asparagine glycan is linked to asparagine 509. A helical transmembrane segment spans residues 512–532 (VFGAIDFWAQFAFLTVFLLVF). Residue asparagine 543 is glycosylated (N-linked (GlcNAc...) asparagine). The interval 578 to 603 (AKRTVGGHPNGQGYGTSGTNGTASSR) is disordered. Residues 585-595 (HPNGQGYGTSG) show a composition bias toward gly residues. A glycan (N-linked (GlcNAc...) asparagine) is linked at asparagine 597.

This sequence belongs to the LIMR family. LMBRD1 subfamily.

The protein resides in the lysosome membrane. Functionally, probable lysosomal cobalamin transporter. Required to export cobalamin from lysosomes allowing its conversion to cofactors. This chain is Probable lysosomal cobalamin transporter, found in Neurospora crassa (strain ATCC 24698 / 74-OR23-1A / CBS 708.71 / DSM 1257 / FGSC 987).